A 240-amino-acid polypeptide reads, in one-letter code: Transcriptional regulatory protein rxt2 (240 aa).

The protein belongs to the RXT2 family. Component of the RPD3C(L) complex.

It localises to the nucleus. Component of the RPD3C(L) histone deacetylase complex (HDAC) responsible for the deacetylation of lysine residues on the N-terminal part of the core histones (H2A, H2B, H3 and H4). Histone deacetylation gives a tag for epigenetic repression and plays an important role in transcriptional regulation, cell cycle progression and developmental events. This Schizosaccharomyces pombe (strain 972 / ATCC 24843) (Fission yeast) protein is Transcriptional regulatory protein rxt2 (rtx2).